Here is a 68-residue protein sequence, read N- to C-terminus: Metallothionein-3 (68 aa).

The residue at position 1 (Met1) is an N-acetylmethionine. Positions 1–30 (MDPETCPCPSGGSCTCADSCKCEGCKCTSC) are beta. A divalent metal cation is bound by residues Cys6, Cys8, Cys14, Cys16, Cys20, Cys22, Cys25, Cys27, and Cys30. The tract at residues 31-68 (KKSCCSCCPAECEKCAKDCVCKGGEAAEAEAEKCSCCQ) is alpha. Phosphoserine is present on Ser33. A divalent metal cation contacts are provided by Cys34, Cys35, Cys37, Cys38, Cys42, Cys45, Cys49, Cys51, Cys64, Cys66, and Cys67.

This sequence belongs to the metallothionein superfamily. Type 1 family. As to expression, abundant in a subset of astrocytes in the normal human brain, but greatly reduced in the Alzheimer disease (AD) brain.

Its function is as follows. Binds heavy metals. Contains three zinc and three copper atoms per polypeptide chain and only a negligible amount of cadmium. Inhibits survival and neurite formation of cortical neurons in vitro. In Homo sapiens (Human), this protein is Metallothionein-3 (MT3).